A 275-amino-acid polypeptide reads, in one-letter code: Shikimate dehydrogenase (NADP(+)) (275 aa).

Residues 19 to 21 (SIS) and Thr66 contribute to the shikimate site. Catalysis depends on Lys70, which acts as the Proton acceptor. Glu82 is an NADP(+) binding site. Shikimate contacts are provided by Asn91 and Asp106. NADP(+) is bound by residues 129–133 (GAGGA), 153–158 (NRTYER), and Ile219. Residue Tyr221 participates in shikimate binding. An NADP(+)-binding site is contributed by Gly242.

Belongs to the shikimate dehydrogenase family. Homodimer.

The catalysed reaction is shikimate + NADP(+) = 3-dehydroshikimate + NADPH + H(+). It functions in the pathway metabolic intermediate biosynthesis; chorismate biosynthesis; chorismate from D-erythrose 4-phosphate and phosphoenolpyruvate: step 4/7. Involved in the biosynthesis of the chorismate, which leads to the biosynthesis of aromatic amino acids. Catalyzes the reversible NADPH linked reduction of 3-dehydroshikimate (DHSA) to yield shikimate (SA). The chain is Shikimate dehydrogenase (NADP(+)) from Dictyoglomus turgidum (strain DSM 6724 / Z-1310).